The primary structure comprises 570 residues: La-related protein 7 (570 aa).

N-acetylmethionine is present on Met1. The segment covering 1–16 (METENQKTMEESTKRK) has biased composition (basic and acidic residues). Disordered stretches follow at residues 1–24 (METE…KRSR) and 180–364 (LNNP…ERHK). Residues 22–116 (RSRVKQVLAD…KPLGERPKDE (95 aa)) form the HTH La-type RNA-binding domain. In terms of domain architecture, RRM spans 119-197 (RTVYVELLPK…PRKPGIFPKT (79 aa)). Basic residues predominate over residues 213–222 (KKKKKKKGRI). Lys231 is covalently cross-linked (Glycyl lysine isopeptide (Lys-Gly) (interchain with G-Cter in SUMO2)). The residue at position 251 (Thr251) is a Phosphothreonine. Ser253 and Ser256 each carry phosphoserine. Thr260 bears the Phosphothreonine mark. Over residues 286 to 295 (RAGKRERCSA) the composition is skewed to basic and acidic residues. Phosphoserine is present on residues Ser294 and Ser334. Thr335 carries the phosphothreonine modification. Residues 340–349 (ETDRKGDSLS) are compositionally biased toward basic and acidic residues. Ser347 bears the Phosphoserine mark. The segment covering 350 to 363 (KVKRKHKKKHKERH) has biased composition (basic residues). A Glycyl lysine isopeptide (Lys-Gly) (interchain with G-Cter in SUMO2) cross-link involves residue Lys406. One can recognise a xRRM domain in the interval 438 to 551 (QFVTGVIVKI…TEKLITKAEK (114 aa)).

It belongs to the LARP7 family. Core component of the 7SK RNP complex, at least composed of 7SK RNA, LARP7, MEPCE, HEXIM1 (or HEXIM2) and P-TEFb (composed of CDK9 and CCNT1/cyclin-T1). Interacts with METTL16. Interacts with RBM7; upon genotoxic stress this interaction is enhanced, triggering the release of inactive P-TEFb complex from the core, yielding to P-TEFb complex activation. Associates with box C/D small nucleolar ribonucleoprotein (snoRNP) complexes.

It localises to the nucleus. Its subcellular location is the nucleoplasm. Functionally, RNA-binding protein that specifically binds distinct small nuclear RNA (snRNAs) and regulates their processing and function. Specifically binds the 7SK snRNA (7SK RNA) and acts as a core component of the 7SK ribonucleoprotein (RNP) complex, thereby acting as a negative regulator of transcription elongation by RNA polymerase II. The 7SK RNP complex sequesters the positive transcription elongation factor b (P-TEFb) in a large inactive 7SK RNP complex preventing RNA polymerase II phosphorylation and subsequent transcriptional elongation. The 7SK RNP complex also promotes snRNA gene transcription by RNA polymerase II via interaction with the little elongation complex (LEC). LARP7 specifically binds to the highly conserved 3'-terminal U-rich stretch of 7SK RNA; on stimulation, remains associated with 7SK RNA, whereas P-TEFb is released from the complex. LARP7 also acts as a regulator of mRNA splicing fidelity by promoting U6 snRNA processing. Specifically binds U6 snRNAs and associates with a subset of box C/D RNP complexes: promotes U6 snRNA 2'-O-methylation by facilitating U6 snRNA loading into box C/D RNP complexes. U6 snRNA 2'-O-methylation is required for mRNA splicing fidelity. Binds U6 snRNAs with a 5'-CAGGG-3' sequence motif. U6 snRNA processing is required for spermatogenesis. The chain is La-related protein 7 from Mus musculus (Mouse).